Here is a 130-residue protein sequence, read N- to C-terminus: Methylglyoxal synthase (130 aa).

The 130-residue stretch at 1–130 (MSKPRIALIA…DLARNMQDVC (130 aa)) folds into the MGS-like domain. Residues His-11, Lys-15, 37–40 (TGTT), and 57–58 (SG) contribute to the substrate site. Asp-63 acts as the Proton donor/acceptor in catalysis. Substrate is bound at residue His-90.

It belongs to the methylglyoxal synthase family.

The catalysed reaction is dihydroxyacetone phosphate = methylglyoxal + phosphate. In terms of biological role, catalyzes the formation of methylglyoxal from dihydroxyacetone phosphate. The sequence is that of Methylglyoxal synthase from Burkholderia vietnamiensis (strain G4 / LMG 22486) (Burkholderia cepacia (strain R1808)).